The following is a 185-amino-acid chain: Ribosome-recycling factor (185 aa).

Belongs to the RRF family.

Its subcellular location is the cytoplasm. Responsible for the release of ribosomes from messenger RNA at the termination of protein biosynthesis. May increase the efficiency of translation by recycling ribosomes from one round of translation to another. The protein is Ribosome-recycling factor of Exiguobacterium sibiricum (strain DSM 17290 / CCUG 55495 / CIP 109462 / JCM 13490 / 255-15).